Here is a 568-residue protein sequence, read N- to C-terminus: Probable asparagine--tRNA ligase, cytoplasmic (568 aa).

Belongs to the class-II aminoacyl-tRNA synthetase family.

The protein resides in the cytoplasm. It carries out the reaction tRNA(Asn) + L-asparagine + ATP = L-asparaginyl-tRNA(Asn) + AMP + diphosphate + H(+). In terms of biological role, cytosolic asparaginyl-tRNA synthetase which catalyzes the specific attachment of asparagine to its cognate tRNA. The chain is Probable asparagine--tRNA ligase, cytoplasmic (nrs1) from Schizosaccharomyces pombe (strain 972 / ATCC 24843) (Fission yeast).